Consider the following 69-residue polypeptide: MTKSTELRQKDVAGLKTEVKELQKAHFGLRMQKATQQLTNTSTLRSTRRSIARAKTILAETIVKQGAKK.

Belongs to the universal ribosomal protein uL29 family.

This is Large ribosomal subunit protein uL29 from Polaromonas sp. (strain JS666 / ATCC BAA-500).